Consider the following 499-residue polypeptide: Probable cytosol aminopeptidase (499 aa).

Residues Lys269 and Asp274 each contribute to the Mn(2+) site. Lys281 is an active-site residue. 3 residues coordinate Mn(2+): Asp292, Asp351, and Glu353. Arg355 is an active-site residue.

It belongs to the peptidase M17 family. It depends on Mn(2+) as a cofactor.

The protein resides in the cytoplasm. It carries out the reaction Release of an N-terminal amino acid, Xaa-|-Yaa-, in which Xaa is preferably Leu, but may be other amino acids including Pro although not Arg or Lys, and Yaa may be Pro. Amino acid amides and methyl esters are also readily hydrolyzed, but rates on arylamides are exceedingly low.. It catalyses the reaction Release of an N-terminal amino acid, preferentially leucine, but not glutamic or aspartic acids.. Presumably involved in the processing and regular turnover of intracellular proteins. Catalyzes the removal of unsubstituted N-terminal amino acids from various peptides. This chain is Probable cytosol aminopeptidase, found in Actinobacillus pleuropneumoniae serotype 7 (strain AP76).